The primary structure comprises 160 residues: Cytochrome b6-f complex subunit 4 (160 aa).

The next 3 membrane-spanning stretches (helical) occupy residues 36 to 56 (LLYI…GLSV), 95 to 115 (LLGV…PFIE), and 131 to 151 (TVFL…TFPI).

It belongs to the cytochrome b family. PetD subfamily. In terms of assembly, the 4 large subunits of the cytochrome b6-f complex are cytochrome b6, subunit IV (17 kDa polypeptide, petD), cytochrome f and the Rieske protein, while the 4 small subunits are petG, petL, petM and petN. The complex functions as a dimer.

It is found in the plastid. It localises to the chloroplast thylakoid membrane. Its function is as follows. Component of the cytochrome b6-f complex, which mediates electron transfer between photosystem II (PSII) and photosystem I (PSI), cyclic electron flow around PSI, and state transitions. In Stigeoclonium helveticum (Green alga), this protein is Cytochrome b6-f complex subunit 4.